We begin with the raw amino-acid sequence, 169 residues long: Small ribosomal subunit protein uS5c (169 aa).

In terms of domain architecture, S5 DRBM spans 17–80 (WQERVIQVRR…TDGRKNLINI (64 aa)).

This sequence belongs to the universal ribosomal protein uS5 family. Part of the 30S ribosomal subunit. Contacts protein S4.

The protein resides in the plastid. It localises to the chloroplast. In terms of biological role, with S4 and S12 plays an important role in translational accuracy. In Guillardia theta (Cryptophyte), this protein is Small ribosomal subunit protein uS5c (rps5).